Reading from the N-terminus, the 160-residue chain is MGVYTYENEFTSDIPAPKLFKAFVLDADNLIPKIAPQAVKCAEILEGDGGPGTIKKITFGEGSHYGYVKHKIHSIDKENHTYSYSLIEGDALSDNIEKIDYETKLVSAPHGGTVIKTTSKYHTKGDVEIKEEHVKAGKEKASHLFKLIEGYLKDHPSEYN.

Belongs to the BetVI family. As to quaternary structure, monomer.

In terms of biological role, may be involved in ripening of fruits. This is Major strawberry allergen Fra a 1-A from Fragaria ananassa (Strawberry).